The following is a 91-amino-acid chain: Ribonuclease P protein component 4 (91 aa).

Zn(2+) contacts are provided by C48, C51, C71, and C74.

It belongs to the eukaryotic/archaeal RNase P protein component 4 family. In terms of assembly, consists of a catalytic RNA component and at least 4-5 protein subunits. Requires Zn(2+) as cofactor.

It is found in the cytoplasm. The enzyme catalyses Endonucleolytic cleavage of RNA, removing 5'-extranucleotides from tRNA precursor.. Functionally, part of ribonuclease P, a protein complex that generates mature tRNA molecules by cleaving their 5'-ends. This chain is Ribonuclease P protein component 4, found in Picrophilus torridus (strain ATCC 700027 / DSM 9790 / JCM 10055 / NBRC 100828 / KAW 2/3).